The sequence spans 802 residues: G-type lectin S-receptor-like serine/threonine-protein kinase At1g61550 (802 aa).

The first 19 residues, 1–19, serve as a signal peptide directing secretion; it reads MTRFACFLFSTLLLSFSYA. A Bulb-type lectin domain is found at 20 to 139; it reads AITPTSPLSI…VSGITLWQSF (120 aa). The Extracellular segment spans residues 20–421; that stretch reads AITPTSPLSI…EMGGNQRKKT (402 aa). N-linked (GlcNAc...) asparagine glycans are attached at residues asparagine 48, asparagine 89, asparagine 112, asparagine 231, and asparagine 262. An EGF-like domain is found at 273–309; the sequence is PANTCDFYGVCGPFGLCVMSIPPKCKCFKGFVPQFSE. 2 disulfide bridges follow: cysteine 277/cysteine 289 and cysteine 283/cysteine 297. 3 N-linked (GlcNAc...) asparagine glycosylation sites follow: asparagine 315, asparagine 331, and asparagine 370. The PAN domain occupies 328 to 410; it reads CQGNSTGRHV…GELLSIRLAS (83 aa). Cystine bridges form between cysteine 363–cysteine 384 and cysteine 367–cysteine 373. Residues 422 to 442 form a helical membrane-spanning segment; the sequence is IIASIVSISLFVTLASAAFGF. Topologically, residues 443-802 are cytoplasmic; that stretch reads WRYRLKHNAI…EVTQSVVLGR (360 aa). Positions 489–774 constitute a Protein kinase domain; sequence FSLVNKLGQG…DLPLPKEPTF (286 aa). Residues 495–503 and lysine 517 each bind ATP; that span reads LGQGGFGPV. Serine 523 and serine 538 each carry phosphoserine. A caM-binding region spans residues 578-595; that stretch reads RKRVEIDWPKRFSIIQGI. The Proton acceptor role is filled by aspartate 614. Residues serine 618 and serine 631 each carry the phosphoserine modification. Position 648 is a phosphothreonine (threonine 648). Serine 691 bears the Phosphoserine mark.

It belongs to the protein kinase superfamily. Ser/Thr protein kinase family.

It is found in the cell membrane. It carries out the reaction L-seryl-[protein] + ATP = O-phospho-L-seryl-[protein] + ADP + H(+). The catalysed reaction is L-threonyl-[protein] + ATP = O-phospho-L-threonyl-[protein] + ADP + H(+). The sequence is that of G-type lectin S-receptor-like serine/threonine-protein kinase At1g61550 from Arabidopsis thaliana (Mouse-ear cress).